We begin with the raw amino-acid sequence, 250 residues long: 3-deoxy-manno-octulosonate cytidylyltransferase (250 aa).

It belongs to the KdsB family.

Its subcellular location is the cytoplasm. The enzyme catalyses 3-deoxy-alpha-D-manno-oct-2-ulosonate + CTP = CMP-3-deoxy-beta-D-manno-octulosonate + diphosphate. It participates in nucleotide-sugar biosynthesis; CMP-3-deoxy-D-manno-octulosonate biosynthesis; CMP-3-deoxy-D-manno-octulosonate from 3-deoxy-D-manno-octulosonate and CTP: step 1/1. The protein operates within bacterial outer membrane biogenesis; lipopolysaccharide biosynthesis. Its function is as follows. Activates KDO (a required 8-carbon sugar) for incorporation into bacterial lipopolysaccharide in Gram-negative bacteria. This chain is 3-deoxy-manno-octulosonate cytidylyltransferase, found in Geobacter sulfurreducens (strain ATCC 51573 / DSM 12127 / PCA).